The following is a 218-amino-acid chain: Adenylate kinase (218 aa).

Residue 10-15 (GAGKGT) participates in ATP binding. The NMP stretch occupies residues 30 to 59 (STGDMLRAAVKAGTPLGIEAKKVMDAGGLM). AMP contacts are provided by residues Thr31, Arg36, 57–59 (GLM), 85–88 (GYPR), and Gln92. The segment at 122–159 (GRWVHLASGRSYNTQSNPPKVAGQDDITGEALIQRDDD) is LID. ATP-binding positions include Arg123 and 132 to 133 (SY). Arg156 and Arg167 together coordinate AMP. Gly203 provides a ligand contact to ATP.

This sequence belongs to the adenylate kinase family. As to quaternary structure, monomer.

The protein localises to the cytoplasm. The catalysed reaction is AMP + ATP = 2 ADP. Its pathway is purine metabolism; AMP biosynthesis via salvage pathway; AMP from ADP: step 1/1. Catalyzes the reversible transfer of the terminal phosphate group between ATP and AMP. Plays an important role in cellular energy homeostasis and in adenine nucleotide metabolism. In Bordetella avium (strain 197N), this protein is Adenylate kinase.